The primary structure comprises 412 residues: Branched-chain alpha-ketoacid dehydrogenase kinase (412 aa).

The N-terminal 30 residues, 1–30 (MILTSVLGSGPRSWSSLWPLLGSSLSLRAR), are a transit peptide targeting the mitochondrion. Ser-31 is modified (phosphoserine). Residue Ser-52 is modified to Phosphoserine; by autocatalysis. A Histidine kinase domain is found at 159–404 (LDDHKDVVTL…DVYLRLRHID (246 aa)). N6-acetyllysine occurs at positions 192 and 233. Residues Asn-279 and Asp-315 each contribute to the ATP site. Asn-279 lines the Mg(2+) pocket. Val-328, Asp-330, and Phe-333 together coordinate K(+). The ATP site is built by Thr-334 and Thr-335. Phosphoserine occurs at positions 356 and 360. Residues His-364, Gly-367, and Leu-370 each coordinate ATP. Gly-367 is a binding site for K(+).

It belongs to the PDK/BCKDK protein kinase family. As to quaternary structure, homodimer. Homotetramer. Dimerizes through interaction of two opposing nucleotide-binding domains. Interacts with E2 component of the branched-chain alpha-ketoacid dehydrogenase (BCKDH) complex. Competes with BCKDK for binding to the E2 component; this interaction is modulated by branched-chain alpha-keto acids. At steady state, BCKDH holoenzyme contains BCKDK and BCKDHA is phosphorylated. In response to high levels of branched-chain alpha-keto acids, the inhibitory BCKDK is replaced by activating PPM1K leading to BCKDHA dephosphorylation and BCAA degradation. Post-translationally, autophosphorylated. As to expression, ubiquitous.

It is found in the mitochondrion matrix. The protein resides in the mitochondrion. The catalysed reaction is L-seryl-[3-methyl-2-oxobutanoate dehydrogenase] + ATP = O-phospho-L-seryl-[3-methyl-2-oxobutanoate dehydrogenase] + ADP + H(+). It catalyses the reaction L-seryl-[protein] + ATP = O-phospho-L-seryl-[protein] + ADP + H(+). Serine/threonine-protein kinase component of macronutrients metabolism. Forms a functional kinase and phosphatase pair with PPM1K, serving as a metabolic regulatory node that coordinates branched-chain amino acids (BCAAs) with glucose and lipid metabolism via two distinct phosphoprotein targets: mitochondrial BCKDHA subunit of the branched-chain alpha-ketoacid dehydrogenase (BCKDH) complex and cytosolic ACLY, a lipogenic enzyme of Krebs cycle. Phosphorylates and inactivates mitochondrial BCKDH complex a multisubunit complex consisting of three multimeric components each involved in different steps of BCAA catabolism: E1 composed of BCKDHA and BCKDHB, E2 core composed of DBT monomers, and E3 composed of DLD monomers. Associates with the E2 component of BCKDH complex and phosphorylates BCKDHA on Ser-334, leading to conformational changes that interrupt substrate channeling between E1 and E2 and inactivates the BCKDH complex. Phosphorylates ACLY on Ser-455 in response to changes in cellular carbohydrate abundance such as occurs during fasting to feeding metabolic transition. Refeeding stimulates MLXIPL/ChREBP transcription factor, leading to increased BCKDK to PPM1K expression ratio, phosphorylation and activation of ACLY that ultimately results in the generation of malonyl-CoA and oxaloacetate immediate substrates of de novo lipogenesis and glucogenesis, respectively. Recognizes phosphosites having SxxE/D canonical motif. The protein is Branched-chain alpha-ketoacid dehydrogenase kinase (Bckdk) of Mus musculus (Mouse).